We begin with the raw amino-acid sequence, 631 residues long: Hepatocyte nuclear factor 1-alpha (631 aa).

Positions 1–31 (MVSKLSQLQTELLAALLESGLSKEALIQALG) are dimerization. An HNF-p1 domain is found at 1 to 32 (MVSKLSQLQTELLAALLESGLSKEALIQALGE). The segment at 40–81 (GEGPLDKGESCGGGRGELAELPNGLGETRGSEDETDDDGEDF) is disordered. S70 is subject to Phosphoserine. Position 74 is a phosphothreonine (T74). Positions 87–182 (KELENLSPEE…VAQQFTHAGQ (96 aa)) constitute a POU-specific atypical domain. S93 is modified (phosphoserine). A Glycyl lysine isopeptide (Lys-Gly) (interchain with G-Cter in ubiquitin) cross-link involves residue K117. 4 interaction with DNA regions span residues 130–132 (QRE), 143–149 (HLSQHLN), 155–158 (KTQK), and 203–206 (RFKW). The disordered stretch occupies residues 183–205 (GGLIEEPTGDELPTKKGRRNRFK). Residues 197–205 (KKGRRNRFK) carry the Nuclear localization signal motif. The homeobox; HNF1-type DNA-binding region spans 199 to 279 (GRRNRFKWGP…NRRKEEAFRH (81 aa)). S247 is subject to Phosphoserine. Interaction with DNA regions lie at residues 263-265 (RVY) and 270-273 (NRRK). Disordered regions lie at residues 283–358 (MDTY…GLEP) and 545–567 (SDTEASSESGLHTPASQATTLHV). A compositionally biased stretch (pro residues) spans 288 to 298 (GPPPGPGPGPA). Phosphoserine is present on S313. Over residues 325–353 (PATSETAEVPSSSGGPLVTVSTPLHQVSP) the composition is skewed to polar residues.

The protein belongs to the HNF1 homeobox family. As to quaternary structure, binds DNA as a dimer. Heterotetramer with PCBD1; formed by a dimer of dimers. Interacts with PCBD1. Interacts with BHLHE41. Interacts with NR5A2. Interacts with SPOP; this interaction promotes ubiquitination and degradation of HNF1A. Ubiquitinated in s SPOP-dependent manner; leading to prteasomal degradation. Liver.

The protein localises to the nucleus. In terms of biological role, transcriptional activator that regulates the tissue specific expression of multiple genes, especially in pancreatic islet cells and in liver. Binds to the inverted palindrome 5'-GTTAATNATTAAC-3'. Activates the transcription of CYP1A2, CYP2E1 and CYP3A11. (Microbial infection) Plays a crucial role for hepatitis B virus gene transcription and DNA replication. Mechanistically, synergistically cooperates with NR5A2 to up-regulate the activity of one of the critical cis-elements in the hepatitis B virus genome enhancer II (ENII). The sequence is that of Hepatocyte nuclear factor 1-alpha (HNF1A) from Homo sapiens (Human).